Reading from the N-terminus, the 373-residue chain is Dual-specificity RNA methyltransferase RlmN (373 aa).

Glu-94 (proton acceptor) is an active-site residue. Residues 100–339 form the Radical SAM core domain; it reads EDDRATLCVS…VIVRKTRGDD (240 aa). Residues Cys-107 and Cys-344 are joined by a disulfide bond. [4Fe-4S] cluster is bound by residues Cys-114, Cys-118, and Cys-121. S-adenosyl-L-methionine contacts are provided by residues 168–169, Ser-200, 222–224, and Asn-301; these read GE and SIH. Residue Cys-344 is the S-methylcysteine intermediate of the active site.

It belongs to the radical SAM superfamily. RlmN family. Requires [4Fe-4S] cluster as cofactor.

Its subcellular location is the cytoplasm. It catalyses the reaction adenosine(2503) in 23S rRNA + 2 reduced [2Fe-2S]-[ferredoxin] + 2 S-adenosyl-L-methionine = 2-methyladenosine(2503) in 23S rRNA + 5'-deoxyadenosine + L-methionine + 2 oxidized [2Fe-2S]-[ferredoxin] + S-adenosyl-L-homocysteine. The enzyme catalyses adenosine(37) in tRNA + 2 reduced [2Fe-2S]-[ferredoxin] + 2 S-adenosyl-L-methionine = 2-methyladenosine(37) in tRNA + 5'-deoxyadenosine + L-methionine + 2 oxidized [2Fe-2S]-[ferredoxin] + S-adenosyl-L-homocysteine. Its function is as follows. Specifically methylates position 2 of adenine 2503 in 23S rRNA and position 2 of adenine 37 in tRNAs. m2A2503 modification seems to play a crucial role in the proofreading step occurring at the peptidyl transferase center and thus would serve to optimize ribosomal fidelity. The protein is Dual-specificity RNA methyltransferase RlmN of Shewanella woodyi (strain ATCC 51908 / MS32).